The following is a 338-amino-acid chain: Auxin-responsive protein IAA9 (338 aa).

Residues 1 to 25 form a disordered region; that stretch reads MSPEEELQSNVSVASSSPTSNCISR. Over residues 9-21 the composition is skewed to low complexity; that stretch reads SNVSVASSSPTSN. The EAR-like (transcriptional repression) signature appears at 68-72; sequence LTLGL. The disordered stretch occupies residues 150–186; the sequence is ATQSVTKKDVPQNIPKGQSSTTNNSSSPPAAKAQIVG. Low complexity predominate over residues 168–180; the sequence is SSTTNNSSSPPAA. A PB1 domain is found at 216 to 318; it reads ALFVKVSMDG…VCKKLKIMKG (103 aa).

This sequence belongs to the Aux/IAA family. As to quaternary structure, homodimers and heterodimers. Interacts with TPL. Phosphorylated by phytochrome A in vitro. Highly expressed in the whole plant.

The protein localises to the nucleus. Aux/IAA proteins are short-lived transcriptional factors that function as repressors of early auxin response genes at low auxin concentrations. Repression is thought to result from the interaction with auxin response factors (ARFs), proteins that bind to the auxin-responsive promoter element (AuxRE). Formation of heterodimers with ARF proteins may alter their ability to modulate early auxin response genes expression. The chain is Auxin-responsive protein IAA9 (IAA9) from Arabidopsis thaliana (Mouse-ear cress).